The chain runs to 370 residues: Protein RKD5 (370 aa).

A disordered region spans residues 193-232 (DSETESEESVNEKTEHSEFENDKTEQSESDAKTEILKKKK). The segment covering 202-228 (VNEKTEHSEFENDKTEQSESDAKTEIL) has biased composition (basic and acidic residues). Residues 224-309 (KTEILKKKKR…AEKQQEKNEA (86 aa)) enclose the RWP-RK domain. Residues 283–328 (HRKIKSLDCLIHDLQREAEKQQEKNEAAAMAVAKKQEKLETEKRNI) adopt a coiled-coil conformation. Positions 347–370 (NFKKRHRASRAKKNQESLVTSSST) are disordered. The segment covering 349 to 358 (KKRHRASRAK) has biased composition (basic residues).

The protein resides in the nucleus. Its function is as follows. Putative transcription factor. The sequence is that of Protein RKD5 (RKD5) from Arabidopsis thaliana (Mouse-ear cress).